The primary structure comprises 156 residues: Small ribosomal subunit protein uS7A/uS7B (156 aa).

This sequence belongs to the universal ribosomal protein uS7 family. Part of the 30S ribosomal subunit. Contacts proteins S9 and S11.

Its function is as follows. One of the primary rRNA binding proteins, it binds directly to 16S rRNA where it nucleates assembly of the head domain of the 30S subunit. Is located at the subunit interface close to the decoding center, probably blocks exit of the E-site tRNA. The chain is Small ribosomal subunit protein uS7A/uS7B from Cereibacter sphaeroides (strain ATCC 17029 / ATH 2.4.9) (Rhodobacter sphaeroides).